Here is a 230-residue protein sequence, read N- to C-terminus: Protein RESPONSE TO ABA AND SALT 1 (230 aa).

Residues 7–230 (SQSFTIFVDG…RLRDRDQERA (224 aa)) form the DOG1 domain.

Its function is as follows. Negative regulator of salt (NaCl) tolerance probably by enhancing abscisic acid (ABA) sensitivity. The chain is Protein RESPONSE TO ABA AND SALT 1 from Arabidopsis thaliana (Mouse-ear cress).